The primary structure comprises 388 residues: P2X purinoceptor 4 (388 aa).

The Cytoplasmic segment spans residues 1 to 33 (MAGCCSVLGSFLFEYDTPRIVLIRSRKVGLMNR). Residues 34-54 (AVQLLILAYVIGWVFVWEKGY) form a helical membrane-spanning segment. The Extracellular portion of the chain corresponds to 55–338 (QETDSVVSSV…KFDIIPTMIN (284 aa)). ATP is bound by residues Lys-67 and Lys-69. Lys-67 and Lys-69 together coordinate CTP. 2 N-linked (GlcNAc...) asparagine glycosylation sites follow: Asn-75 and Asn-110. Cystine bridges form between Cys-116–Cys-165, Cys-126–Cys-149, and Cys-132–Cys-159. Residues Asn-153 and Asn-184 are each glycosylated (N-linked (GlcNAc...) asparagine). Residues Thr-186 and Leu-188 each contribute to the ATP site. Residue Thr-186 participates in CTP binding. N-linked (GlcNAc...) asparagine glycans are attached at residues Asn-199 and Asn-208. 2 disulfide bridges follow: Cys-217-Cys-227 and Cys-261-Cys-270. Residues Asn-293, Arg-295, and Lys-313 each coordinate ATP. Asn-293, Arg-295, and Lys-313 together coordinate CTP. The helical transmembrane segment at 339–359 (VGSGLALLGVATVLCDVIVLY) threads the bilayer. Over 360–388 (CMKKKYYYRDKKYKYVEDYEQGLSGEMNQ) the chain is Cytoplasmic.

It belongs to the P2X receptor family. In terms of assembly, functional P2RXs are organized as homomeric and heteromeric trimers. Forms heterotrimer with P2RX1. Interacts with P2RX7 (via C-terminus); this interaction is functional only in the presence of ATP. Forms heterotrimer with P2RX4; functional differences between homomeric P2RX4 and P2RX4/6 heterotrimer are minor. Interacts with AP1M2. As to expression, widespread distribution in the brain. Strongly expressed in microglial cells. Also expressed in epithelial cells.

Its subcellular location is the cell membrane. It localises to the lysosome membrane. The enzyme catalyses K(+)(in) = K(+)(out). It catalyses the reaction Na(+)(in) = Na(+)(out). It carries out the reaction Ca(2+)(in) = Ca(2+)(out). Its activity is regulated as follows. Activated by ATP. pH-dependent and inhibited by acidic pH. In terms of biological role, ATP-gated nonselective transmembrane cation channel permeable to potassium, sodium and calcium. CTP, but not GTP or UTP, functions as a weak affinity agonist for P2RX4. Activated by extracellularly released ATP, it plays multiple role in immunity and central nervous system physiology. Plays a key role in initial steps of T-cell activation and Ca(2+) microdomain formation. Also participates in basal T-cell activity without TCR/CD3 stimulation. Promotes the differentiation and activation of Th17 cells via expression of retinoic acid-related orphan receptor C/RORC. Upon activation, drives microglia motility via the PI3K/Akt pathway. Could also function as an ATP-gated cation channel of lysosomal membranes. In Rattus norvegicus (Rat), this protein is P2X purinoceptor 4 (P2rx4).